We begin with the raw amino-acid sequence, 156 residues long: Ribosomal RNA large subunit methyltransferase H (156 aa).

Residues Leu73, Gly104, and 123-128 (LSSLTL) contribute to the S-adenosyl-L-methionine site.

Belongs to the RNA methyltransferase RlmH family. In terms of assembly, homodimer.

The protein localises to the cytoplasm. It catalyses the reaction pseudouridine(1915) in 23S rRNA + S-adenosyl-L-methionine = N(3)-methylpseudouridine(1915) in 23S rRNA + S-adenosyl-L-homocysteine + H(+). Specifically methylates the pseudouridine at position 1915 (m3Psi1915) in 23S rRNA. This Bordetella avium (strain 197N) protein is Ribosomal RNA large subunit methyltransferase H.